Here is a 352-residue protein sequence, read N- to C-terminus: Pollen-specific protein SF21 (352 aa).

The protein belongs to the NDRG family. Pollen.

The chain is Pollen-specific protein SF21 (SF21) from Helianthus annuus (Common sunflower).